We begin with the raw amino-acid sequence, 122 residues long: Ribosome-binding factor A (122 aa).

The protein belongs to the RbfA family. As to quaternary structure, monomer. Binds 30S ribosomal subunits, but not 50S ribosomal subunits or 70S ribosomes.

The protein resides in the cytoplasm. In terms of biological role, one of several proteins that assist in the late maturation steps of the functional core of the 30S ribosomal subunit. Associates with free 30S ribosomal subunits (but not with 30S subunits that are part of 70S ribosomes or polysomes). Required for efficient processing of 16S rRNA. May interact with the 5'-terminal helix region of 16S rRNA. The polypeptide is Ribosome-binding factor A (Dichelobacter nodosus (strain VCS1703A)).